The chain runs to 160 residues: Small ribosomal subunit protein uS17z (160 aa).

It belongs to the universal ribosomal protein uS17 family.

The protein resides in the cytoplasm. This chain is Small ribosomal subunit protein uS17z (RPS11A), found in Arabidopsis thaliana (Mouse-ear cress).